Reading from the N-terminus, the 67-residue chain is Conotoxin TsMMSK-B022 (67 aa).

The first 22 residues, 1-22 (MMSKLGVLLTICLLLFPLTAVS), serve as a signal peptide directing secretion. A propeptide spanning residues 23 to 50 (LDGDQPADLPELRAQDFAPERSPWFDPV) is cleaved from the precursor. 3 cysteine pairs are disulfide-bonded: C53-C65, C54-C61, and C58-C64. P63 bears the 4-hydroxyproline mark.

The protein belongs to the conotoxin M superfamily. As to expression, expressed by the venom duct.

It localises to the secreted. The chain is Conotoxin TsMMSK-B022 from Conus tessulatus (Tessellate cone).